Reading from the N-terminus, the 100-residue chain is Urease subunit gamma (100 aa).

Belongs to the urease gamma subunit family. Heterotrimer of UreA (gamma), UreB (beta) and UreC (alpha) subunits. Three heterotrimers associate to form the active enzyme.

It is found in the cytoplasm. It catalyses the reaction urea + 2 H2O + H(+) = hydrogencarbonate + 2 NH4(+). It functions in the pathway nitrogen metabolism; urea degradation; CO(2) and NH(3) from urea (urease route): step 1/1. This is Urease subunit gamma from Nocardia farcinica (strain IFM 10152).